The following is a 354-amino-acid chain: Protein NDH-DEPENDENT CYCLIC ELECTRON FLOW 5 (354 aa).

A chloroplast-targeting transit peptide spans 1–49 (MALVHYMNVSRSTFPLSRSSKINLSSSFASLPLQFHKNIKRLESSVPPS).

Its subcellular location is the plastid. It is found in the chloroplast thylakoid membrane. In terms of biological role, required for both formation and activity of the chloroplast NAD(P)H dehydrogenase (NDH) complex of the photosynthetic electron transport chain. May function in assembly or stabilization of the NDH complex. The protein is Protein NDH-DEPENDENT CYCLIC ELECTRON FLOW 5 of Arabidopsis thaliana (Mouse-ear cress).